The primary structure comprises 300 residues: Ribosomal RNA small subunit methyltransferase A (300 aa).

S-adenosyl-L-methionine is bound by residues Asn-36, Val-38, Gly-63, Glu-84, Asp-113, and Asn-131.

This sequence belongs to the class I-like SAM-binding methyltransferase superfamily. rRNA adenine N(6)-methyltransferase family. RsmA subfamily.

The protein resides in the cytoplasm. It catalyses the reaction adenosine(1518)/adenosine(1519) in 16S rRNA + 4 S-adenosyl-L-methionine = N(6)-dimethyladenosine(1518)/N(6)-dimethyladenosine(1519) in 16S rRNA + 4 S-adenosyl-L-homocysteine + 4 H(+). In terms of biological role, specifically dimethylates two adjacent adenosines (A1518 and A1519) in the loop of a conserved hairpin near the 3'-end of 16S rRNA in the 30S particle. May play a critical role in biogenesis of 30S subunits. This is Ribosomal RNA small subunit methyltransferase A from Kineococcus radiotolerans (strain ATCC BAA-149 / DSM 14245 / SRS30216).